The sequence spans 151 residues: MKVILKENIDTLGHIGDIVKVAPGYARNYLLPKGLAVEATEKNAKALEHVKRQMAYRKDKVTQAAKLLLAKLEGITVELVHQAGVEGKLFGSVTNMEIAAFLKEKGVDIDRKKIALAEPIKQVGEYSVPVKLHPEVTASLKVNVSAPAAAE.

The protein belongs to the bacterial ribosomal protein bL9 family.

Its function is as follows. Binds to the 23S rRNA. The protein is Large ribosomal subunit protein bL9 of Pelobacter propionicus (strain DSM 2379 / NBRC 103807 / OttBd1).